Reading from the N-terminus, the 277-residue chain is Large ribosomal subunit protein uL2c (277 aa).

Positions 223-277 (VVMNPIDHPHGGGEGRAPIGRKKPLTPWGHPALGKRSRKNNKYSDTLILRRRKNS) are disordered.

Belongs to the universal ribosomal protein uL2 family. Part of the 50S ribosomal subunit.

The protein resides in the plastid. It localises to the chloroplast. The polypeptide is Large ribosomal subunit protein uL2c (rpl2) (Marchantia polymorpha (Common liverwort)).